The sequence spans 81 residues: ATP synthase subunit c, chloroplastic (81 aa).

Transmembrane regions (helical) follow at residues 7-27 and 57-77; these read AASVIAAGLAVGLASIGPGVG and LAFMEALTIYGLVVALALLFA.

This sequence belongs to the ATPase C chain family. F-type ATPases have 2 components, F(1) - the catalytic core - and F(0) - the membrane proton channel. F(1) has five subunits: alpha(3), beta(3), gamma(1), delta(1), epsilon(1). F(0) has four main subunits: a(1), b(1), b'(1) and c(10-14). The alpha and beta chains form an alternating ring which encloses part of the gamma chain. F(1) is attached to F(0) by a central stalk formed by the gamma and epsilon chains, while a peripheral stalk is formed by the delta, b and b' chains.

It localises to the plastid. Its subcellular location is the chloroplast thylakoid membrane. Its function is as follows. F(1)F(0) ATP synthase produces ATP from ADP in the presence of a proton or sodium gradient. F-type ATPases consist of two structural domains, F(1) containing the extramembraneous catalytic core and F(0) containing the membrane proton channel, linked together by a central stalk and a peripheral stalk. During catalysis, ATP synthesis in the catalytic domain of F(1) is coupled via a rotary mechanism of the central stalk subunits to proton translocation. Key component of the F(0) channel; it plays a direct role in translocation across the membrane. A homomeric c-ring of between 10-14 subunits forms the central stalk rotor element with the F(1) delta and epsilon subunits. In Arabis hirsuta (Hairy rock-cress), this protein is ATP synthase subunit c, chloroplastic.